We begin with the raw amino-acid sequence, 779 residues long: MINQENNDLYDLNEALQVENLTLNDYEEICKRLKKKPNRTELGMFGVMWSEHCCYRNSKPLLSKFPTKGKNVLVGPGENAGVIDVGNNQKLVFKIESHNHPSAIEPFQGAATGVGGILRDIFTMGARPIAVLNSLRFGNLDKSSNVDLLRGVVSGIAHYGNCVGVPTVGGEIDFDDSYSGNPLVNVMALGLLETEEIVCSGAKNVGSPVLYVGNTTGRDGVGGASFASSELTTTSLDDRPAVQVGDPFVEKSLIEACLDAFKTGDVIAAQDMGAAGLTCSSAEMAANGNLGISIDLDLVPSREDDMSSYQYLLSESQERMLFVVKEEKINDLIEKFNKWGLYASVIGEVIGTNEVIISHKGKIVAQIPTSALSDDTPVNFHNVINNPPDDLLNKWEWKENDLPEIHEQKIFSLKENKKFSFQEIILKLLSNPSIASKRWIYKQYDSQVQANTVFKPGKSDAAVVRLREQYKKNKSKVFSGVAASVDCNSRWVALDPFRGSIAAVAESARNVSCVGAEPVAITNNLNFSSPESEIGYWQLSSSCNGITEACKALETPVTGGNVSLYNESKNKDNLITPINPTPVIGMVGKIDNIEKAISCEWKNIDDQIWLIGSYKSDTTIAASSYLEYFHGEITGRPPKIDLLDEKFCQSFLRNAILNSLVVSSHDISDGGLAIALAESCILSAKGATIELKKDINREDNLLFAEGGSRIIFSINKIKQNEWLNYLKQNQINFPSSVYVKKIGHVSSETLKINIQDKNICNIRVEELSEKFNNSISDYF.

The active site involves His-52. The ATP site is built by Tyr-55 and Lys-94. Glu-96 lines the Mg(2+) pocket. Substrate-binding positions include Ser-97 to His-100 and Arg-119. His-98 acts as the Proton acceptor in catalysis. Position 120 (Asp-120) interacts with Mg(2+). Substrate is bound at residue Gln-243. Asp-271 contacts Mg(2+). Substrate is bound at residue Glu-315–Gln-317. Asn-523 and Gly-560 together coordinate ATP. Asn-561 lines the Mg(2+) pocket. Residue Ser-563 participates in substrate binding.

The protein belongs to the FGAMS family. As to quaternary structure, monomer. Part of the FGAM synthase complex composed of 1 PurL, 1 PurQ and 2 PurS subunits.

It is found in the cytoplasm. The enzyme catalyses N(2)-formyl-N(1)-(5-phospho-beta-D-ribosyl)glycinamide + L-glutamine + ATP + H2O = 2-formamido-N(1)-(5-O-phospho-beta-D-ribosyl)acetamidine + L-glutamate + ADP + phosphate + H(+). It participates in purine metabolism; IMP biosynthesis via de novo pathway; 5-amino-1-(5-phospho-D-ribosyl)imidazole from N(2)-formyl-N(1)-(5-phospho-D-ribosyl)glycinamide: step 1/2. Its function is as follows. Part of the phosphoribosylformylglycinamidine synthase complex involved in the purines biosynthetic pathway. Catalyzes the ATP-dependent conversion of formylglycinamide ribonucleotide (FGAR) and glutamine to yield formylglycinamidine ribonucleotide (FGAM) and glutamate. The FGAM synthase complex is composed of three subunits. PurQ produces an ammonia molecule by converting glutamine to glutamate. PurL transfers the ammonia molecule to FGAR to form FGAM in an ATP-dependent manner. PurS interacts with PurQ and PurL and is thought to assist in the transfer of the ammonia molecule from PurQ to PurL. The protein is Phosphoribosylformylglycinamidine synthase subunit PurL of Prochlorococcus marinus (strain MIT 9301).